The sequence spans 957 residues: ERC protein 2 (957 aa).

Residues 1-13 are compositionally biased toward polar residues; the sequence is MYGSARTISNLEG. The tract at residues 1–44 is disordered; that stretch reads MYGSARTISNLEGSPSRSPRLPRSPRLGHRRTSSGGGGGTGKTL. Residues 14-25 are compositionally biased toward low complexity; it reads SPSRSPRLPRSP. S65 and S666 each carry phosphoserine. Residues 140 to 917 adopt a coiled-coil conformation; sequence RQVRDSTMLD…RMKLMADNYD (778 aa). Over residues 922–943 the composition is skewed to basic residues; that stretch reads HYHHHHHHHHHRSPGRSQHSNH. A disordered region spans residues 922 to 957; it reads HYHHHHHHHHHRSPGRSQHSNHRPSPDQDDEEGIWA. Residues 948–957 show a composition bias toward acidic residues; the sequence is DQDDEEGIWA.

As to quaternary structure, interacts with BSN, ERC1, PPFIA1, PPFIA2, PPFIA3 and PPFIA4. Interacts through its C-terminus with the PDZ domain of RIMS1. Part of a complex consisting of ERC2, RIMS1 and UNC13A. Expressed throughout the central nervous system, including hippocampus, cortex, cerebellum and olfactory bulb.

Its subcellular location is the cytoplasm. The protein localises to the synapse. It localises to the presynaptic active zone. It is found in the cytoskeleton. Thought to be involved in the organization of the cytomatrix at the nerve terminals active zone (CAZ) which regulates neurotransmitter release. Seems to act together with BSN. May recruit liprin-alpha proteins to the CAZ. This is ERC protein 2 (Erc2) from Mus musculus (Mouse).